The chain runs to 296 residues: Nitrogenase iron protein (296 aa).

ATP is bound at residue 11–18 (GKGGIGKS). Cys99 is a binding site for [4Fe-4S] cluster. Residue Arg102 is modified to ADP-ribosylarginine; by dinitrogenase reductase ADP-ribosyltransferase. Cys134 provides a ligand contact to [4Fe-4S] cluster.

It belongs to the NifH/BchL/ChlL family. In terms of assembly, homodimer. [4Fe-4S] cluster is required as a cofactor. The reversible ADP-ribosylation of Arg-102 inactivates the nitrogenase reductase and regulates nitrogenase activity.

It catalyses the reaction N2 + 8 reduced [2Fe-2S]-[ferredoxin] + 16 ATP + 16 H2O = H2 + 8 oxidized [2Fe-2S]-[ferredoxin] + 2 NH4(+) + 16 ADP + 16 phosphate + 6 H(+). Functionally, the key enzymatic reactions in nitrogen fixation are catalyzed by the nitrogenase complex, which has 2 components: the iron protein and the molybdenum-iron protein. The protein is Nitrogenase iron protein of Dechloromonas aromatica (strain RCB).